Reading from the N-terminus, the 726-residue chain is Catalase-peroxidase (726 aa).

A disordered region spans residues 1–33; sequence MSTSDDIHNTTATGKCPFHQGGHDQSAGGGTTT. Positions 105–226 form a cross-link, tryptophyl-tyrosyl-methioninium (Trp-Tyr) (with M-252); that stretch reads WHGAGTYRSI…LGATEMGLIY (122 aa). Catalysis depends on His106, which acts as the Proton acceptor. Positions 226–252 form a cross-link, tryptophyl-tyrosyl-methioninium (Tyr-Met) (with W-105); the sequence is YVNPEGPDHSGEPLSAAAAIRATFGNM. His267 contributes to the heme b binding site.

It belongs to the peroxidase family. Peroxidase/catalase subfamily. In terms of assembly, homodimer or homotetramer. Heme b is required as a cofactor. Formation of the three residue Trp-Tyr-Met cross-link is important for the catalase, but not the peroxidase activity of the enzyme.

It carries out the reaction H2O2 + AH2 = A + 2 H2O. It catalyses the reaction 2 H2O2 = O2 + 2 H2O. In terms of biological role, bifunctional enzyme with both catalase and broad-spectrum peroxidase activity. The protein is Catalase-peroxidase of Escherichia coli O1:K1 / APEC.